The following is a 404-amino-acid chain: G1/S-specific cyclin-E2 (404 aa).

The segment at 1-44 is disordered; it reads MSRRSSRLQAKQQPQPSQTESPQEAQIIQAKKRKTTQDVKKRRE. The segment covering 12 to 26 has biased composition (low complexity); sequence QQPQPSQTESPQEAQ. S21 is modified (phosphoserine). The segment covering 35-44 has biased composition (basic and acidic residues); it reads TTQDVKKRRE. K348 carries the N6-lactoyllysine modification. Position 383 is a phosphoserine (S383). T392 bears the Phosphothreonine mark.

It belongs to the cyclin family. Cyclin E subfamily. Interacts with the CDK2 (in vivo) and CDK3 (in vitro) protein kinases to form a serine/threonine kinase holoenzyme complex. The cyclin subunit imparts substrate specificity to the complex. Post-translationally, phosphorylation by CDK2 triggers its release from CDK2 and degradation via the ubiquitin proteasome pathway. In terms of processing, lactylated at Lys-348. Delactylated by SIRT3. According to PubMed:9858585, highest levels of expression in adult testis, thymus and brain. Lower levels in placenta, spleen and colon. Consistently elevated levels in tumor-derived cells compared to non-transformed proliferating cells. According to PubMed:9840927: low levels in thymus, prostate, brain, skeletal muscle, and kidney. Elevated levels in lung. According to PubMed:9840943 highly expressed in testis, placenta, thymus and brain. In a lesser extent in small intestine and colon.

It is found in the nucleus. Essential for the control of the cell cycle at the late G1 and early S phase. This Homo sapiens (Human) protein is G1/S-specific cyclin-E2 (CCNE2).